The sequence spans 393 residues: Probable acetyl-CoA acetyltransferase (393 aa).

The active-site Acyl-thioester intermediate is Cys88. Residues His348 and Cys378 each act as proton acceptor in the active site.

The protein belongs to the thiolase-like superfamily. Thiolase family.

Its subcellular location is the cytoplasm. The catalysed reaction is 2 acetyl-CoA = acetoacetyl-CoA + CoA. This Escherichia coli (strain K12) protein is Probable acetyl-CoA acetyltransferase (yqeF).